A 736-amino-acid polypeptide reads, in one-letter code: Copper-exporting P-type ATPase (736 aa).

Residues 1 to 17 are compositionally biased toward basic residues; the sequence is MKHDHHQGHTHSGKGHA. Residues 1–32 form a disordered region; sequence MKHDHHQGHTHSGKGHACHHEHNSPKTQQASS. A run of 6 helical transmembrane segments spans residues 85–105, 114–134, 149–169, 183–203, 341–361, and 369–389; these read FWIALMLTIPVVILEMGGHGL, SSWIQLLLATPVVLWGGWPFF, FTLIAMGIGVAWIYSMVAVLW, VVAVYFEAAAVITTLVLLGQV, GWFVPAVILVAVLSFIVWALL, and YGLIAAVSVLIIACPCALGLA. The 4-aspartylphosphate intermediate role is filled by D426. Residues D426, T428, and D624 each coordinate Mg(2+). Helical transmembrane passes span 682–702 and 706–726; these read LFFAFIYNVLGVPLAAGVLYP and LLLSPMIAAAAMALSSVSVII.

Belongs to the cation transport ATPase (P-type) (TC 3.A.3) family. Type IB subfamily. Mg(2+) serves as cofactor.

Its subcellular location is the cell inner membrane. It catalyses the reaction Cu(+)(in) + ATP + H2O = Cu(+)(out) + ADP + phosphate + H(+). Activated by phospholipids, Mg(2+) and Cu(+). Functionally, couples the hydrolysis of ATP with the export of copper. This is Copper-exporting P-type ATPase from Legionella pneumophila subsp. pneumophila (strain Philadelphia 1 / ATCC 33152 / DSM 7513).